A 298-amino-acid chain; its full sequence is GTP cyclohydrolase FolE2 (298 aa).

Belongs to the GTP cyclohydrolase IV family.

It catalyses the reaction GTP + H2O = 7,8-dihydroneopterin 3'-triphosphate + formate + H(+). It functions in the pathway cofactor biosynthesis; 7,8-dihydroneopterin triphosphate biosynthesis; 7,8-dihydroneopterin triphosphate from GTP: step 1/1. Functionally, converts GTP to 7,8-dihydroneopterin triphosphate. This chain is GTP cyclohydrolase FolE2, found in Neisseria meningitidis serogroup C (strain 053442).